A 600-amino-acid chain; its full sequence is Prostaglandin G/H synthase 1 (600 aa).

Residues Met1 to Pro24 form the signal peptide. One can recognise an EGF-like domain in the interval Pro32–Thr70. 4 disulfides stabilise this stretch: Cys36/Cys47, Cys37/Cys159, Cys41/Cys57, and Cys59/Cys69. N-linked (GlcNAc...) asparagine glycans are attached at residues Asn68, Asn104, and Asn144. His207 serves as the catalytic Proton acceptor. Catalysis depends on Tyr385, which acts as the For cyclooxygenase activity. Residue His388 participates in heme b binding. Asn410 carries an N-linked (GlcNAc...) asparagine glycan. Residues Cys569 and Cys575 are joined by a disulfide bond.

This sequence belongs to the prostaglandin G/H synthase family. Homodimer. Heme b serves as cofactor.

It is found in the microsome membrane. It localises to the endoplasmic reticulum membrane. The enzyme catalyses (5Z,8Z,11Z,14Z)-eicosatetraenoate + AH2 + 2 O2 = prostaglandin H2 + A + H2O. It carries out the reaction (5Z,8Z,11Z,14Z)-eicosatetraenoate + 2 O2 = prostaglandin G2. The catalysed reaction is prostaglandin G2 + AH2 = prostaglandin H2 + A + H2O. It catalyses the reaction (9Z,12Z)-octadecadienoate + AH2 + O2 = (9R)-hydroxy-(10E,12Z)-octadecadienoate + A + H2O. The enzyme catalyses (9Z,12Z)-octadecadienoate + AH2 + O2 = (9S)-hydroxy-(10E,12Z)-octadecadienoate + A + H2O. It carries out the reaction (9Z,12Z)-octadecadienoate + AH2 + O2 = (13S)-hydroxy-(9Z,11E)-octadecadienoate + A + H2O. The catalysed reaction is (9Z,12Z)-octadecadienoate + AH2 + O2 = (13R)-hydroxy-(9Z,11E)-octadecadienoate + A + H2O. It functions in the pathway lipid metabolism; prostaglandin biosynthesis. Its activity is regulated as follows. The cyclooxygenase activity is inhibited by nonsteroidal anti-inflammatory drugs (NSAIDs) including ibuprofen, flurbiprofen, ketoprofen, naproxen, flurbiprofen, anirolac, fenclofenac and diclofenac. Dual cyclooxygenase and peroxidase that plays an important role in the biosynthesis pathway of prostanoids, a class of C20 oxylipins mainly derived from arachidonate ((5Z,8Z,11Z,14Z)-eicosatetraenoate, AA, C20:4(n-6)), with a particular role in the inflammatory response. The cyclooxygenase activity oxygenates AA to the hydroperoxy endoperoxide prostaglandin G2 (PGG2), and the peroxidase activity reduces PGG2 to the hydroxy endoperoxide prostaglandin H2 (PGH2), the precursor of all 2-series prostaglandins and thromboxanes. This complex transformation is initiated by abstraction of hydrogen at carbon 13 (with S-stereochemistry), followed by insertion of molecular O2 to form the endoperoxide bridge between carbon 9 and 11 that defines prostaglandins. The insertion of a second molecule of O2 (bis-oxygenase activity) yields a hydroperoxy group in PGG2 that is then reduced to PGH2 by two electrons. Involved in the constitutive production of prostanoids in particular in the stomach and platelets. In gastric epithelial cells, it is a key step in the generation of prostaglandins, such as prostaglandin E2 (PGE2), which plays an important role in cytoprotection. In platelets, it is involved in the generation of thromboxane A2 (TXA2), which promotes platelet activation and aggregation, vasoconstriction and proliferation of vascular smooth muscle cells. Can also use linoleate (LA, (9Z,12Z)-octadecadienoate, C18:2(n-6)) as substrate and produce hydroxyoctadecadienoates (HODEs) in a regio- and stereospecific manner, being (9R)-HODE ((9R)-hydroxy-(10E,12Z)-octadecadienoate) and (13S)-HODE ((13S)-hydroxy-(9Z,11E)-octadecadienoate) its major products. The chain is Prostaglandin G/H synthase 1 (PTGS1) from Bos taurus (Bovine).